Here is a 457-residue protein sequence, read N- to C-terminus: DNA repair protein RadA (457 aa).

Residues 10–27 (CQECGYESAKWMGKCPGC) form a C4-type zinc finger. Position 97–104 (97–104 (GDPGIGKS)) interacts with ATP. The short motif at 254-258 (KNRFG) is the RadA KNRFG motif element. The interval 353–457 (DAYVNVAGGV…QDALEVTLGR (105 aa)) is lon-protease-like.

This sequence belongs to the RecA family. RadA subfamily.

Functionally, DNA-dependent ATPase involved in processing of recombination intermediates, plays a role in repairing DNA breaks. Stimulates the branch migration of RecA-mediated strand transfer reactions, allowing the 3' invading strand to extend heteroduplex DNA faster. Binds ssDNA in the presence of ADP but not other nucleotides, has ATPase activity that is stimulated by ssDNA and various branched DNA structures, but inhibited by SSB. Does not have RecA's homology-searching function. This Halalkalibacterium halodurans (strain ATCC BAA-125 / DSM 18197 / FERM 7344 / JCM 9153 / C-125) (Bacillus halodurans) protein is DNA repair protein RadA.